The chain runs to 382 residues: D-galactonate dehydratase (382 aa).

Aspartate 183 contributes to the Mg(2+) binding site. The active-site Proton donor is the histidine 185. Residues glutamate 209 and glutamate 235 each contribute to the Mg(2+) site. The active-site Proton acceptor is the histidine 285.

It belongs to the mandelate racemase/muconate lactonizing enzyme family. GalD subfamily. The cofactor is Mg(2+).

The catalysed reaction is D-galactonate = 2-dehydro-3-deoxy-D-galactonate + H2O. The protein operates within carbohydrate acid metabolism; D-galactonate degradation; D-glyceraldehyde 3-phosphate and pyruvate from D-galactonate: step 1/3. Catalyzes the dehydration of D-galactonate to 2-keto-3-deoxy-D-galactonate. The polypeptide is D-galactonate dehydratase (Escherichia coli O9:H4 (strain HS)).